A 740-amino-acid polypeptide reads, in one-letter code: Alpha-1,6-mannosylglycoprotein 6-beta-N-acetylglucosaminyltransferase A (740 aa).

Topologically, residues 1–13 are cytoplasmic; that stretch reads MAFFSPWKLSSQK. Residues 14–30 traverse the membrane as a helical; Signal-anchor for type II membrane protein segment; the sequence is LGFFLVTFGFIWGMMLL. The Lumenal portion of the chain corresponds to 31–740; it reads HFTIQQRTQP…GQVALCKDCL (710 aa). Residues Asn109, Asn114, and Asn117 are each glycosylated (N-linked (GlcNAc...) asparagine). Cystine bridges form between Cys144–Cys182, Cys155–Cys195, Cys171–Cys337, Cys371–Cys625, Cys648–Cys723, Cys652–Cys725, Cys659–Cys712, Cys680–Cys701, and Cys736–Cys739. The segment at 212–740 is sufficient for catalytic activity; that stretch reads NSLAEIRTDF…GQVALCKDCL (529 aa). Asn333 carries N-linked (GlcNAc...) asparagine glycosylation. 377–378 lines the substrate pocket; sequence DS. N-linked (GlcNAc...) asparagine glycosylation is found at Asn432 and Asn446. Glu525 serves as a coordination point for UDP-N-acetyl-alpha-D-glucosamine. Lys553 lines the substrate pocket.

This sequence belongs to the glycosyltransferase 18 family. In terms of processing, N-glycosylated. Post-translationally, a secreted form is released from the membrane after cleavage by gamma-secretase. Detected in cerebellum.

It localises to the golgi apparatus membrane. The protein resides in the perikaryon. The protein localises to the secreted. The catalysed reaction is N(4)-{beta-D-GlcNAc-(1-&gt;2)-[beta-D-GlcNAc-(1-&gt;4)]-alpha-D-Man-(1-&gt;3)-[beta-D-GlcNAc-(1-&gt;2)-alpha-D-Man-(1-&gt;6)]-beta-D-Man-(1-&gt;4)-beta-D-GlcNAc-(1-&gt;4)-beta-D-GlcNAc}-L-asparaginyl-[protein] + UDP-N-acetyl-alpha-D-glucosamine = N(4)-{beta-D-GlcNAc-(1-&gt;2)-[beta-D-GlcNAc-(1-&gt;4)]-alpha-D-Man-(1-&gt;3)-[beta-D-GlcNAc-(1-&gt;2)-[beta-D-GlcNAc-(1-&gt;6)]-alpha-D-Man-(1-&gt;6)]-beta-D-Man-(1-&gt;4)-beta-D-GlcNAc-(1-&gt;4)-beta-D-GlcNAc}-L-asparaginyl-[protein] + UDP + H(+). It functions in the pathway protein modification; protein glycosylation. Its function is as follows. Catalyzes the addition of N-acetylglucosamine (GlcNAc) in beta 1-6 linkage to the alpha-linked mannose of biantennary N-linked oligosaccharides. Catalyzes an important step in the biosynthesis of branched, complex-type N-glycans, such as those found on EGFR, TGFR (TGF-beta receptor) and CDH2. Via its role in the biosynthesis of complex N-glycans, plays an important role in the activation of cellular signaling pathways, reorganization of the actin cytoskeleton, cell-cell adhesion and cell migration. MGAT5-dependent EGFR N-glycosylation enhances the interaction between EGFR and LGALS3 and thereby prevents rapid EGFR endocytosis and prolongs EGFR signaling. Required for efficient interaction between TGFB1 and its receptor. Enhances activation of intracellular signaling pathways by several types of growth factors, including FGF2, PDGF, IGF, TGFB1 and EGF. MGAT5-dependent CDH2 N-glycosylation inhibits CDH2-mediated homotypic cell-cell adhesion and contributes to the regulation of downstream signaling pathways. Promotes cell migration. Contributes to the regulation of the inflammatory response. MGAT5-dependent TCR N-glycosylation enhances the interaction between TCR and LGALS3, limits agonist-induced TCR clustering, and thereby dampens TCR-mediated responses to antigens. Required for normal leukocyte evasation and accumulation at sites of inflammation. Inhibits attachment of monocytes to the vascular endothelium and subsequent monocyte diapedesis. In terms of biological role, promotes proliferation of umbilical vein endothelial cells and angiogenesis, at least in part by promoting the release of the growth factor FGF2 from the extracellular matrix. In Mus musculus (Mouse), this protein is Alpha-1,6-mannosylglycoprotein 6-beta-N-acetylglucosaminyltransferase A (Mgat5).